Here is a 554-residue protein sequence, read N- to C-terminus: CTP synthase (554 aa).

Positions 1–265 are amidoligase domain; it reads MTPLIFVTGG…DELVIEQFKL (265 aa). A CTP-binding site is contributed by serine 13. Serine 13 contributes to the UTP binding site. Residues 14–19 and aspartate 71 contribute to the ATP site; that span reads SLGKGI. Mg(2+)-binding residues include aspartate 71 and glutamate 139. CTP is bound by residues 146–148, 186–191, and lysine 222; these read DIE and KTKPTQ. Residues 186–191 and lysine 222 contribute to the UTP site; that span reads KTKPTQ. Residues 292-545 form the Glutamine amidotransferase type-1 domain; that stretch reads NIAVVGKYVD…VRAAREKKAG (254 aa). Residue glycine 353 coordinates L-glutamine. Residue cysteine 380 is the Nucleophile; for glutamine hydrolysis of the active site. L-glutamine-binding positions include 381 to 384, glutamate 404, and arginine 471; that span reads YGMQ. Active-site residues include histidine 518 and glutamate 520.

This sequence belongs to the CTP synthase family. As to quaternary structure, homotetramer.

The enzyme catalyses UTP + L-glutamine + ATP + H2O = CTP + L-glutamate + ADP + phosphate + 2 H(+). It carries out the reaction L-glutamine + H2O = L-glutamate + NH4(+). The catalysed reaction is UTP + NH4(+) + ATP = CTP + ADP + phosphate + 2 H(+). Its pathway is pyrimidine metabolism; CTP biosynthesis via de novo pathway; CTP from UDP: step 2/2. With respect to regulation, allosterically activated by GTP, when glutamine is the substrate; GTP has no effect on the reaction when ammonia is the substrate. The allosteric effector GTP functions by stabilizing the protein conformation that binds the tetrahedral intermediate(s) formed during glutamine hydrolysis. Inhibited by the product CTP, via allosteric rather than competitive inhibition. In terms of biological role, catalyzes the ATP-dependent amination of UTP to CTP with either L-glutamine or ammonia as the source of nitrogen. Regulates intracellular CTP levels through interactions with the four ribonucleotide triphosphates. This Xanthomonas euvesicatoria pv. vesicatoria (strain 85-10) (Xanthomonas campestris pv. vesicatoria) protein is CTP synthase.